Here is a 190-residue protein sequence, read N- to C-terminus: Large ribosomal subunit protein bL25 (190 aa).

The protein belongs to the bacterial ribosomal protein bL25 family. CTC subfamily. In terms of assembly, part of the 50S ribosomal subunit; part of the 5S rRNA/L5/L18/L25 subcomplex. Contacts the 5S rRNA. Binds to the 5S rRNA independently of L5 and L18.

This is one of the proteins that binds to the 5S RNA in the ribosome where it forms part of the central protuberance. The protein is Large ribosomal subunit protein bL25 of Neisseria gonorrhoeae (strain ATCC 700825 / FA 1090).